We begin with the raw amino-acid sequence, 450 residues long: MKTVTEFQNKNILVLGIAKSGYAAATLLQKLGANVIVNDGKPLAENVLAAELQAKGMDVVCGGHPLELLERNISLVVKNPGIPYSNPILVAAKEKQIPIVTEVELAYRISEAPFVGITGSNGKTTTTMLTFEMLKEGQKHPVIAGNIGTVACEVAQDAKENEVVVTELSSFQLMGVELFQPKIAAFLNLFEAHLDYHGTKKEYGLAKANIFKNQTENDYSVINADDADVMALSAYSKGQKVLFSTTKEIEDGACIKDNALYFKAEKVVEVDDIVLPGQHNLENILAAMSIAKLLGVSNEAITAVLKRFTGVKHRLEYVTTINNRKFYNDSKATNMLATEKALSAFTQPTVLLAGGLDRGNEFDDLIPYFKNVKAIVTFGQTAPKLVRAAEKAGLDTIESVDTLDEAVVKAYAHSTDGDVILLSPACASWDQFKTFEERGDIFIQAVHKLI.

ATP is bound at residue 119 to 125 (GSNGKTT).

This sequence belongs to the MurCDEF family.

It localises to the cytoplasm. It carries out the reaction UDP-N-acetyl-alpha-D-muramoyl-L-alanine + D-glutamate + ATP = UDP-N-acetyl-alpha-D-muramoyl-L-alanyl-D-glutamate + ADP + phosphate + H(+). It participates in cell wall biogenesis; peptidoglycan biosynthesis. In terms of biological role, cell wall formation. Catalyzes the addition of glutamate to the nucleotide precursor UDP-N-acetylmuramoyl-L-alanine (UMA). In Bacillus anthracis (strain A0248), this protein is UDP-N-acetylmuramoylalanine--D-glutamate ligase.